Reading from the N-terminus, the 883-residue chain is MVDTKTPGDKTLTMPTKTLTLKPRVEQGVVRQSFSHGRSKQVVVEKRGKRRLGGDEPAAPAAPEVAKKPAPAPAAPPRQQQSRPAPQQSRSGMVLRTLTEDERTARATALADARVREIEERKQAEIEAQRRAEQEKIEKAEREAAEARRKAEEERHRQEDEAKRKAETEAKKRFGDAEPAKKPAETSTTTTTAAPARPATTTTRTPTPAGRPPAVAAEAGDDDEAPRMIRRPGGPARPAPPPKQPAAKPGASKQRGRLTVVTALNADDVRERSIASFRRRTQRLKGHASNEPKEKLVREVVIPEVIAIQELANRMSERAVDVIRLLMKQGAMHKITDVIDADTAQLIAEELGHTVKRVAASDVEEGLFDVVDDSTDTEPRSPVVTVMGHVDHGKTSLLDALRHANVVSGEAGGITQHIGAYQVTSPESGKKITFIDTPGHAAFTAMRARGAKVTDIVVLVVAADDGVMPQTIEAINHAKAAGVPIIVAINKIDKPDAKPDRVRTDLLQHNVQVESMGGDVVDVEVSAKNKINLDKLLEMIALQAEILELKTNTQRPAEGTVIEAKLDRGRGPVATVLVQRGTLRVGDIIVAGAEMGRVRALISDQGETVQEAGPSVPVEVLGFNGPPEAGDRLAVVENEARARQITDYRAHQKREKSAASVSGMRGSLEQMMTQLKTSGRKEFPLIVKADVQGSLEAILGSLEKLGTDEVAARILHAGVGGISESDVTLAEGFNAVILGFSVRANKEAAAAAKRNGIEIRYYNIIYDLVDDIKKAMSGLLAPTLRETMLGNAQILEIFNISKVGKVAGCRVTDGTVERGANVRLIRDNVVVHEGKLSTLKRFKDEVKEVVAGQECGMAFENYTDMRAGDIIECYRVETIQRSL.

The disordered stretch occupies residues 1–259 (MVDTKTPGDK…GASKQRGRLT (259 aa)). Low complexity-rich tracts occupy residues 10 to 22 (KTLT…LTLK) and 77 to 89 (PRQQ…PQQS). The span at 113-184 (ARVREIEERK…GDAEPAKKPA (72 aa)) shows a compositional bias: basic and acidic residues. Low complexity predominate over residues 185–218 (ETSTTTTTAAPARPATTTTRTPTPAGRPPAVAAE). Pro residues predominate over residues 235–244 (PARPAPPPKQ). The tr-type G domain occupies 379-548 (PRSPVVTVMG…MIALQAEILE (170 aa)). The tract at residues 388–395 (GHVDHGKT) is G1. GTP is bound at residue 388–395 (GHVDHGKT). The tract at residues 413–417 (GITQH) is G2. Positions 436–439 (DTPG) are G3. Residues 436-440 (DTPGH) and 490-493 (NKID) contribute to the GTP site. Positions 490-493 (NKID) are G4. Positions 526-528 (SAK) are G5.

This sequence belongs to the TRAFAC class translation factor GTPase superfamily. Classic translation factor GTPase family. IF-2 subfamily.

It localises to the cytoplasm. Its function is as follows. One of the essential components for the initiation of protein synthesis. Protects formylmethionyl-tRNA from spontaneous hydrolysis and promotes its binding to the 30S ribosomal subunits. Also involved in the hydrolysis of GTP during the formation of the 70S ribosomal complex. This is Translation initiation factor IF-2 from Rhodopseudomonas palustris (strain ATCC BAA-98 / CGA009).